Reading from the N-terminus, the 189-residue chain is Ras-like protein 1 (189 aa).

Residue 10–17 (GAGGVGKS) participates in GTP binding. Residues 32 to 40 (YDPTIEDSY) carry the Effector region motif. Residues 57–61 (DTAGQ) and 116–119 (NKCD) each bind GTP. A Cysteine methyl ester modification is found at Cys-186. Cys-186 carries S-geranylgeranyl cysteine lipidation. Positions 187–189 (KML) are cleaved as a propeptide — removed in mature form.

It belongs to the small GTPase superfamily. Ras family.

The protein resides in the cell membrane. It carries out the reaction GTP + H2O = GDP + phosphate + H(+). Its activity is regulated as follows. Alternates between an inactive form bound to GDP and an active form bound to GTP. Activated by a guanine nucleotide-exchange factor (GEF) and inactivated by a GTPase-activating protein (GAP). Ras proteins bind GDP/GTP and possess intrinsic GTPase activity. Plays a role in eye development by regulating cell growth, survival of postmitotic ommatidial cells and differentiation of photoreceptor cells. During larval development, mediates Ptth/tor signaling leading to the production of ecdysone, a hormone required for the initiation of metamorphosis. This chain is Ras-like protein 1, found in Drosophila virilis (Fruit fly).